A 441-amino-acid chain; its full sequence is Ribulose bisphosphate carboxylase large chain (441 aa).

Lys5 bears the N6,N6,N6-trimethyllysine mark. Thr164 contributes to the substrate binding site. The active-site Proton acceptor is the Lys166. Lys168 is a substrate binding site. Mg(2+) is bound by residues Lys192, Asp194, and Glu195. Position 192 is an N6-carboxylysine (Lys192). His285 serves as the catalytic Proton acceptor. Positions 286, 318, and 370 each coordinate substrate.

The protein belongs to the RuBisCO large chain family. Type I subfamily. Heterohexadecamer of 8 large chains and 8 small chains; disulfide-linked. The disulfide link is formed within the large subunit homodimers. Mg(2+) serves as cofactor. The disulfide bond which can form in the large chain dimeric partners within the hexadecamer appears to be associated with oxidative stress and protein turnover.

Its subcellular location is the plastid. The protein resides in the chloroplast. It carries out the reaction 2 (2R)-3-phosphoglycerate + 2 H(+) = D-ribulose 1,5-bisphosphate + CO2 + H2O. It catalyses the reaction D-ribulose 1,5-bisphosphate + O2 = 2-phosphoglycolate + (2R)-3-phosphoglycerate + 2 H(+). RuBisCO catalyzes two reactions: the carboxylation of D-ribulose 1,5-bisphosphate, the primary event in carbon dioxide fixation, as well as the oxidative fragmentation of the pentose substrate in the photorespiration process. Both reactions occur simultaneously and in competition at the same active site. This chain is Ribulose bisphosphate carboxylase large chain, found in Hemionitis engywookii (Fendler's false cloak fern).